The chain runs to 539 residues: MKTDILIIGGGGAAARAAIECRDKNVIIAVKGLFGKSGCTVMAEGGYNAVFNPKDSFKKHFYDTVKGGGFINNPKLVEILVKNAPKELLNLERFGALFDRTEDGFIAQRPFGGQSFNRTCYCGDRTGHEIMRGLMEYISKFERIKILEEVMAIKLIVKDNRCYGAIFLDLKTGNIFPIFAKATILATGGAGQLYPITSNPIQKTGDGFAIAYNEGAELIDMEMVQFHPTGMVGTGILVTEAVRGEGGILYNKYKERFMVRYDKERMELSTRDVVARAIYKEIQEGRGVNGGVYLDVSHLPNEVIEKKLETMLKQFLRVGIDIRKEPMIVSPTAHHFMGGLKINERCETNIIGLFACGEVTGGVHGANRLGGNALADTQVFGAIAGKSAKEFVENHDFNNIDAEEDVAKILEEINSLKGDLNVYNLIEDLRKVMWDYVSIIRNEDGLKKALEKIDEIERNIDNVKVNGIIDLQNYFELKNMVVVAKLVTKSALYRKESRGAHYREDFPETKEEWRGNIIIKGKKMWFEKLDYSVFQNFLE.

Leucine 6–glutamate 20 contributes to the FAD binding site. Residues histidine 227 and arginine 243 contribute to the active site.

It belongs to the FAD-dependent oxidoreductase 2 family. FRD/SDH subfamily. It depends on FAD as a cofactor.

This is an uncharacterized protein from Methanocaldococcus jannaschii (strain ATCC 43067 / DSM 2661 / JAL-1 / JCM 10045 / NBRC 100440) (Methanococcus jannaschii).